Here is a 244-residue protein sequence, read N- to C-terminus: Inactive chemokine-binding protein (244 aa).

The disordered stretch occupies residues 1–79; the sequence is MHVPASLQQS…STSVEDVDPP (79 aa). A compositionally biased stretch (polar residues) spans 37–53; that stretch reads QDQTPTNDKICQSVTEI. A compositionally biased stretch (acidic residues) spans 54–77; that stretch reads TESESDPDPEVESEDDSTSVEDVD.

It belongs to the orthopoxvirus OPG001 family.

Its subcellular location is the host cytoplasm. The protein is truncated in this vaccinal strain and presumably inactive, because the lack of signal peptide prevents the protein of being secreted. In the wild-type viruses inhibits host immune defense by binding to host chemokines. Binds host CC chemokines (beta chemokines) such as RANTES with high affinity, but not CXC or C chemokines (alpha and gamma chemokines). The protein is Inactive chemokine-binding protein (OPG001) of Vaccinia virus (strain Western Reserve) (VACV).